The sequence spans 712 residues: Patatin-like phospholipase domain-containing protein AFUA_1G04970 (712 aa).

A compositionally biased stretch (basic and acidic residues) spans 1-13; that stretch reads MTSDEKSATRDIY. The tract at residues 1–20 is disordered; the sequence is MTSDEKSATRDIYDPNTLPD. Residues 85-105 traverse the membrane as a helical segment; that stretch reads WPFLFTVFAWITVLGFAYTLT. Positions 275-466 constitute a PNPLA domain; sequence LCLSGGATFA…RTDIPIKALN (192 aa). The short motif at 306–310 is the GXSXG element; it reads GTSGG. Ser-308 (nucleophile) is an active-site residue. The Proton acceptor role is filled by Asp-453. Residues 628 to 688 are disordered; sequence RRRQDRAQEH…PDARRSSMFE (61 aa). 2 stretches are compositionally biased toward basic and acidic residues: residues 632–646 and 652–664; these read DRAQEHADRMVERLD and RQSDYKDESHYAE. The segment covering 667–676 has biased composition (polar residues); sequence DSLSATSSRP. The span at 677-688 shows a compositional bias: basic and acidic residues; that stretch reads HTPDARRSSMFE.

It belongs to the PLPL family.

It localises to the membrane. Its function is as follows. Probable lipid hydrolase. The protein is Patatin-like phospholipase domain-containing protein AFUA_1G04970 of Aspergillus fumigatus (strain ATCC MYA-4609 / CBS 101355 / FGSC A1100 / Af293) (Neosartorya fumigata).